Consider the following 191-residue polypeptide: Insulin-like peptide INSL6 (191 aa).

Residues 1-22 form the signal peptide; that stretch reads MKQLCCSCLLWLGLLLTPFSRE. Intrachain disulfides connect Cys33/Cys172, Cys45/Cys185, and Cys171/Cys176. A propeptide spans 53–161 (connecting peptide); sequence FEMEEQSPMT…RSLFWGNHSQ (109 aa).

Belongs to the insulin family.

It localises to the secreted. Its function is as follows. May have a role in sperm development and fertilization. This Mus musculus (Mouse) protein is Insulin-like peptide INSL6 (Insl6).